An 880-amino-acid polypeptide reads, in one-letter code: Leucine--tRNA ligase (880 aa).

Residues 46–56 carry the 'HIGH' region motif; it reads PYPSGALHMGH. Residues 638–642 carry the 'KMSKS' region motif; that stretch reads KMSKS. Residue K641 coordinates ATP.

The protein belongs to the class-I aminoacyl-tRNA synthetase family.

It localises to the cytoplasm. The enzyme catalyses tRNA(Leu) + L-leucine + ATP = L-leucyl-tRNA(Leu) + AMP + diphosphate. The polypeptide is Leucine--tRNA ligase (Stenotrophomonas maltophilia (strain K279a)).